An 84-amino-acid chain; its full sequence is Cell division protein CrgA (84 aa).

The next 2 membrane-spanning stretches (helical) occupy residues 31–51 (VAPV…VFYV) and 60–80 (ALDN…FGVS).

This sequence belongs to the CrgA family.

It localises to the cell membrane. Its function is as follows. Involved in cell division. Coordinates growth and cell division. Required for the formation of the sporulation septa. The protein is Cell division protein CrgA of Streptomyces avermitilis (strain ATCC 31267 / DSM 46492 / JCM 5070 / NBRC 14893 / NCIMB 12804 / NRRL 8165 / MA-4680).